A 360-amino-acid chain; its full sequence is D-alanine--D-alanine ligase (360 aa).

The 205-residue stretch at 149 to 353 folds into the ATP-grasp domain; it reads KKLMAAEGLP…YEELLDVLVQ (205 aa). 176-231 provides a ligand contact to ATP; the sequence is KNLLGLPVFVKPARGGSSIGISRVTAWEDFNKAVGLARAHDEKVIVESEIVGSEVE. 3 residues coordinate Mg(2+): Asp308, Glu320, and Asn322.

The protein belongs to the D-alanine--D-alanine ligase family. The cofactor is Mg(2+). Mn(2+) is required as a cofactor.

The protein localises to the cytoplasm. The enzyme catalyses 2 D-alanine + ATP = D-alanyl-D-alanine + ADP + phosphate + H(+). It participates in cell wall biogenesis; peptidoglycan biosynthesis. In terms of biological role, cell wall formation. The sequence is that of D-alanine--D-alanine ligase from Corynebacterium glutamicum (strain R).